A 442-amino-acid polypeptide reads, in one-letter code: tRNA modification GTPase MnmE (442 aa).

Arginine 22, glutamate 79, and lysine 119 together coordinate (6S)-5-formyl-5,6,7,8-tetrahydrofolate. A TrmE-type G domain is found at 216-366; it reads GIKTCLVGAP…LLEKIKSIFA (151 aa). Position 226 (asparagine 226) interacts with K(+). GTP contacts are provided by residues 226 to 231, 245 to 251, and 270 to 273; these read NSGKSS, SEIPGTT, and DTAG. A Mg(2+)-binding site is contributed by serine 230. K(+) contacts are provided by serine 245, isoleucine 247, and threonine 250. Threonine 251 is a Mg(2+) binding site. A (6S)-5-formyl-5,6,7,8-tetrahydrofolate-binding site is contributed by lysine 442.

The protein belongs to the TRAFAC class TrmE-Era-EngA-EngB-Septin-like GTPase superfamily. TrmE GTPase family. In terms of assembly, homodimer. Heterotetramer of two MnmE and two MnmG subunits. The cofactor is K(+).

Its subcellular location is the cytoplasm. Functionally, exhibits a very high intrinsic GTPase hydrolysis rate. Involved in the addition of a carboxymethylaminomethyl (cmnm) group at the wobble position (U34) of certain tRNAs, forming tRNA-cmnm(5)s(2)U34. This is tRNA modification GTPase MnmE from Mesomycoplasma hyopneumoniae (strain 7448) (Mycoplasma hyopneumoniae).